The following is a 505-amino-acid chain: GDP-Man:Man(3)GlcNAc(2)-PP-Dol alpha-1,2-mannosyltransferase (505 aa).

Over Met1–Met4 the chain is Lumenal. A helical transmembrane segment spans residues Leu5 to Leu25. At Asp26–His130 the chain is on the cytoplasmic side. An intramembrane region (helical) is located at residues Leu131–Phe151. Residues Val152–His374 lie on the Cytoplasmic side of the membrane. The segment at residues Phe375–Ala395 is an intramembrane region (helical). The Cytoplasmic portion of the chain corresponds to Gly396–Asn505.

It belongs to the glycosyltransferase group 1 family.

It is found in the endoplasmic reticulum membrane. It catalyses the reaction an alpha-D-Man-(1-&gt;3)-[alpha-D-Man-(1-&gt;6)]-beta-D-Man-(1-&gt;4)-beta-D-GlcNAc-(1-&gt;4)-alpha-D-GlcNAc-diphospho-di-trans,poly-cis-dolichol + 2 GDP-alpha-D-mannose = an alpha-D-Man-(1-&gt;2)-alpha-D-Man-(1-&gt;2)-alpha-D-Man-(1-&gt;3)-[alpha-D-Man-(1-&gt;6)]-beta-D-Man-(1-&gt;4)-beta-D-GlcNAc-(1-&gt;4)-alpha-D-GlcNAc-diphospho-di-trans,poly-cis-dolichol + 2 GDP + 2 H(+). It functions in the pathway protein modification; protein glycosylation. GDP-Man:Man(3)GlcNAc(2)-PP-Dol alpha-1,2-mannosyltransferase that operates in the biosynthetic pathway of dolichol-linked oligosaccharides, the glycan precursors employed in protein asparagine (N)-glycosylation. The assembly of dolichol-linked oligosaccharides begins on the cytosolic side of the endoplasmic reticulum membrane and finishes in its lumen. The sequential addition of sugars to dolichol pyrophosphate produces dolichol-linked oligosaccharides containing fourteen sugars, including two GlcNAcs, nine mannoses and three glucoses. Once assembled, the oligosaccharide is transferred from the lipid to nascent proteins by oligosaccharyltransferases. Catalyzes, on the cytoplasmic face of the endoplasmic reticulum, the addition of the fourth and fifth mannose residues to the dolichol-linked oligosaccharide chain, to produce Man(5)GlcNAc(2)-PP-dolichol core oligosaccharide. The sequence is that of GDP-Man:Man(3)GlcNAc(2)-PP-Dol alpha-1,2-mannosyltransferase (ALG11) from Candida glabrata (strain ATCC 2001 / BCRC 20586 / JCM 3761 / NBRC 0622 / NRRL Y-65 / CBS 138) (Yeast).